Reading from the N-terminus, the 225-residue chain is Uridylate kinase (225 aa).

9-10 (GS) is a binding site for ATP. G44 contributes to the UMP binding site. Positions 45 and 49 each coordinate ATP. Residues D66 and 114–120 (THPGHTT) contribute to the UMP site. ATP is bound by residues T140, N141, Y146, and D149.

This sequence belongs to the UMP kinase family. Homohexamer.

The protein localises to the cytoplasm. It carries out the reaction UMP + ATP = UDP + ADP. It functions in the pathway pyrimidine metabolism; CTP biosynthesis via de novo pathway; UDP from UMP (UMPK route): step 1/1. Inhibited by UTP. Functionally, catalyzes the reversible phosphorylation of UMP to UDP. In Thermococcus sibiricus (strain DSM 12597 / MM 739), this protein is Uridylate kinase.